The primary structure comprises 383 residues: Dual-specificity RNA methyltransferase RlmN (383 aa).

Glu93 acts as the Proton acceptor in catalysis. The region spanning Glu99–Asp339 is the Radical SAM core domain. Cysteines 106 and 344 form a disulfide. Residues Cys113, Cys117, and Cys120 each contribute to the [4Fe-4S] cluster site. S-adenosyl-L-methionine is bound by residues Gly170 to Glu171, Ser202, Ser224 to His226, and Asn301. The active-site S-methylcysteine intermediate is the Cys344.

The protein belongs to the radical SAM superfamily. RlmN family. [4Fe-4S] cluster serves as cofactor.

The protein localises to the cytoplasm. The enzyme catalyses adenosine(2503) in 23S rRNA + 2 reduced [2Fe-2S]-[ferredoxin] + 2 S-adenosyl-L-methionine = 2-methyladenosine(2503) in 23S rRNA + 5'-deoxyadenosine + L-methionine + 2 oxidized [2Fe-2S]-[ferredoxin] + S-adenosyl-L-homocysteine. The catalysed reaction is adenosine(37) in tRNA + 2 reduced [2Fe-2S]-[ferredoxin] + 2 S-adenosyl-L-methionine = 2-methyladenosine(37) in tRNA + 5'-deoxyadenosine + L-methionine + 2 oxidized [2Fe-2S]-[ferredoxin] + S-adenosyl-L-homocysteine. Functionally, specifically methylates position 2 of adenine 2503 in 23S rRNA and position 2 of adenine 37 in tRNAs. m2A2503 modification seems to play a crucial role in the proofreading step occurring at the peptidyl transferase center and thus would serve to optimize ribosomal fidelity. The sequence is that of Dual-specificity RNA methyltransferase RlmN from Ralstonia nicotianae (strain ATCC BAA-1114 / GMI1000) (Ralstonia solanacearum).